A 218-amino-acid polypeptide reads, in one-letter code: Cytidylate kinase (218 aa).

11 to 19 (GPGASGKGT) lines the ATP pocket.

It belongs to the cytidylate kinase family. Type 1 subfamily.

The protein resides in the cytoplasm. It carries out the reaction CMP + ATP = CDP + ADP. It catalyses the reaction dCMP + ATP = dCDP + ADP. This Neisseria meningitidis serogroup B (strain ATCC BAA-335 / MC58) protein is Cytidylate kinase.